The primary structure comprises 417 residues: Serine hydroxymethyltransferase 2 (417 aa).

(6S)-5,6,7,8-tetrahydrofolate contacts are provided by residues L121 and G125 to L127. At K229 the chain carries N6-(pyridoxal phosphate)lysine. S354–F356 provides a ligand contact to (6S)-5,6,7,8-tetrahydrofolate.

Belongs to the SHMT family. Homodimer. Pyridoxal 5'-phosphate serves as cofactor.

It is found in the cytoplasm. It catalyses the reaction (6R)-5,10-methylene-5,6,7,8-tetrahydrofolate + glycine + H2O = (6S)-5,6,7,8-tetrahydrofolate + L-serine. The protein operates within one-carbon metabolism; tetrahydrofolate interconversion. It functions in the pathway amino-acid biosynthesis; glycine biosynthesis; glycine from L-serine: step 1/1. In terms of biological role, catalyzes the reversible interconversion of serine and glycine with tetrahydrofolate (THF) serving as the one-carbon carrier. This reaction serves as the major source of one-carbon groups required for the biosynthesis of purines, thymidylate, methionine, and other important biomolecules. Also exhibits THF-independent aldolase activity toward beta-hydroxyamino acids, producing glycine and aldehydes, via a retro-aldol mechanism. The sequence is that of Serine hydroxymethyltransferase 2 from Pseudomonas fluorescens (strain Pf0-1).